Consider the following 358-residue polypeptide: Insulin gene enhancer protein isl-2b (358 aa).

LIM zinc-binding domains follow at residues 27–80 and 89–143; these read CVGC…CKRD and CAKC…RADH. Residues 191-250 constitute a DNA-binding region (homeobox); it reads TTRVRTVLNEKQLHTLRTCYNANPRPDALMKEQLVEMTGLSPRVIRVWFQNKRCKDKKRS. Residues 325–335 show a composition bias toward low complexity; sequence ESGSLGNSSGS. The tract at residues 325-358 is disordered; that stretch reads ESGSLGNSSGSDVTSLSSQLPDTPNSMVPSPVET. Over residues 336-358 the composition is skewed to polar residues; sequence DVTSLSSQLPDTPNSMVPSPVET.

It is found in the nucleus. Its function is as follows. Binds to one of the cis-acting domain of the insulin gene enhancer. May be involved in the regional specification of the myotome and also in target recognition by the caudal primary neuron. This Danio rerio (Zebrafish) protein is Insulin gene enhancer protein isl-2b (isl2b).